Consider the following 181-residue polypeptide: Cell division protein SepF (181 aa).

Residues 18-27 (EDYLDDDDYD) are compositionally biased toward acidic residues. Residues 18–42 (EDYLDDDDYDDGRAVGHDDRRAMHE) form a disordered region. Over residues 28-42 (DGRAVGHDDRRAMHE) the composition is skewed to basic and acidic residues.

It belongs to the SepF family. Homodimer. Interacts with FtsZ.

It is found in the cytoplasm. Functionally, cell division protein that is part of the divisome complex and is recruited early to the Z-ring. Probably stimulates Z-ring formation, perhaps through the cross-linking of FtsZ protofilaments. Its function overlaps with FtsA. The sequence is that of Cell division protein SepF from Frankia alni (strain DSM 45986 / CECT 9034 / ACN14a).